The following is a 142-amino-acid chain: Large ribosomal subunit protein uL11 (142 aa).

Belongs to the universal ribosomal protein uL11 family. In terms of assembly, part of the ribosomal stalk of the 50S ribosomal subunit. Interacts with L10 and the large rRNA to form the base of the stalk. L10 forms an elongated spine to which L12 dimers bind in a sequential fashion forming a multimeric L10(L12)X complex. One or more lysine residues are methylated.

Functionally, forms part of the ribosomal stalk which helps the ribosome interact with GTP-bound translation factors. The sequence is that of Large ribosomal subunit protein uL11 from Afipia carboxidovorans (strain ATCC 49405 / DSM 1227 / KCTC 32145 / OM5) (Oligotropha carboxidovorans).